The chain runs to 238 residues: uncharacterized protein (238 aa).

Disordered stretches follow at residues 1 to 51 and 214 to 238; these read MPCT…ASCA and ITVE…FPTA. Residues 16 to 31 show a composition bias toward low complexity; the sequence is ATWRTARPAPRRCGSC.

This is an uncharacterized protein from Streptomyces griseus.